A 309-amino-acid polypeptide reads, in one-letter code: Methyltransferase AacuQ (309 aa).

Residues 57–149 are methyltransferase domain; that stretch reads DVGAGNGPYA…QLRPGGTFAC (93 aa).

It belongs to the methyltransferase superfamily.

It participates in secondary metabolite biosynthesis. In terms of biological role, methyltransferase; part of the gene cluster that mediates the biosynthesis of the tetrahydroxanthone dimer secalonic acid D. The pathway begins with the synthesis of atrochrysone thioester by the polyketide synthase AacuL. The atrochrysone carboxyl ACP thioesterase AacuM then breaks the thioester bond and releases the atrochrysone carboxylic acid from AacuL. Atrochrysone carboxylic acid is decarboxylated by the decarboxylase AacuI, and oxidized by the anthrone oxygenase AacuG to yield emodin. Emodin is then reduced to emodin hydroquinone by a yet unidentified oxidoreductase. A-ring reduction by the short chain dehydrogenase AacuN, dehydration by the scytalone dehydratase-like protein AacuK and probable spontaneous re-oxidation, results in overall deoxygenation to chrysophanol. Baeyer-Villiger oxidation by the Baeyer-Villiger monooxygenase (BVMO) AacuH then yields monodictyphenone. Monodictyphenone is transformed into compounds with the tetrahydroxanthone skeleton via methylesterification by the methyltransferase AacuQ, followed by the action of the flavin-dependent monooxygenase AacuC, the isomerase AacuP, and the short chain dehydrogenase/reductase AacuF or AacuD. AacuF and AacuD should accept the same compound as a substrate but perform the ketoreduction with a different stereoselectivity, thus yielding blennolides B and A, respectively. In the final step of the biosynthesis, the cytochrome P450 monooxygenase AacuE accepts blennolide B and/or blennolide A to conduct the dimerization reaction to furnish the tetrahydroxanthone dimers, secalonic acids D, B, and F. The protein is Methyltransferase AacuQ of Aspergillus aculeatus (strain ATCC 16872 / CBS 172.66 / WB 5094).